The primary structure comprises 227 residues: Enolase-phosphatase E1 (227 aa).

Belongs to the HAD-like hydrolase superfamily. MasA/MtnC family. In terms of assembly, monomer. The cofactor is Mg(2+).

It carries out the reaction 5-methylsulfanyl-2,3-dioxopentyl phosphate + H2O = 1,2-dihydroxy-5-(methylsulfanyl)pent-1-en-3-one + phosphate. It functions in the pathway amino-acid biosynthesis; L-methionine biosynthesis via salvage pathway; L-methionine from S-methyl-5-thio-alpha-D-ribose 1-phosphate: step 3/6. It participates in amino-acid biosynthesis; L-methionine biosynthesis via salvage pathway; L-methionine from S-methyl-5-thio-alpha-D-ribose 1-phosphate: step 4/6. In terms of biological role, bifunctional enzyme that catalyzes the enolization of 2,3-diketo-5-methylthiopentyl-1-phosphate (DK-MTP-1-P) into the intermediate 2-hydroxy-3-keto-5-methylthiopentenyl-1-phosphate (HK-MTPenyl-1-P), which is then dephosphorylated to form the acireductone 1,2-dihydroxy-3-keto-5-methylthiopentene (DHK-MTPene). This chain is Enolase-phosphatase E1, found in Persephonella marina (strain DSM 14350 / EX-H1).